The chain runs to 458 residues: Exodeoxyribonuclease 7 large subunit (458 aa).

This sequence belongs to the XseA family. Heterooligomer composed of large and small subunits.

The protein localises to the cytoplasm. The catalysed reaction is Exonucleolytic cleavage in either 5'- to 3'- or 3'- to 5'-direction to yield nucleoside 5'-phosphates.. Its function is as follows. Bidirectionally degrades single-stranded DNA into large acid-insoluble oligonucleotides, which are then degraded further into small acid-soluble oligonucleotides. The polypeptide is Exodeoxyribonuclease 7 large subunit (Escherichia coli O17:K52:H18 (strain UMN026 / ExPEC)).